Here is a 341-residue protein sequence, read N- to C-terminus: Adenosine deaminase (341 aa).

2 residues coordinate Zn(2+): His-15 and His-17. The substrate site is built by His-17, Asp-19, and Gly-172. His-199 is a binding site for Zn(2+). Glu-202 serves as the catalytic Proton donor. Asp-279 contacts Zn(2+).

Belongs to the metallo-dependent hydrolases superfamily. Adenosine and AMP deaminases family. Adenosine deaminase subfamily. Zn(2+) is required as a cofactor.

The catalysed reaction is adenosine + H2O + H(+) = inosine + NH4(+). It carries out the reaction 2'-deoxyadenosine + H2O + H(+) = 2'-deoxyinosine + NH4(+). Functionally, catalyzes the hydrolytic deamination of adenosine and 2-deoxyadenosine. In Streptococcus equi subsp. zooepidemicus (strain MGCS10565), this protein is Adenosine deaminase.